We begin with the raw amino-acid sequence, 482 residues long: O-acyltransferase ausP (482 aa).

Residues His180 and Asp412 each act as proton acceptor in the active site.

It belongs to the plant acyltransferase family. Monomer.

Its pathway is secondary metabolite biosynthesis; terpenoid biosynthesis. O-acyltransferase; part of the gene cluster B that mediates the biosynthesis of the fungal meroterpenoid acetoxydehydroaustin. The first step of the pathway is the synthesis of 3,5-dimethylorsellinic acid by the polyketide synthase ausA. 3,5-dimethylorsellinic acid is then prenylated by the polyprenyl transferase ausN. Further epoxidation by the FAD-dependent monooxygenase ausM and cyclization by the probable terpene cyclase ausL lead to the formation of protoaustinoid A. Protoaustinoid A is then oxidized to spiro-lactone preaustinoid A3 by the combined action of the FAD-binding monooxygenases ausB and ausC, and the dioxygenase ausE. Acid-catalyzed keto-rearrangement and ring contraction of the tetraketide portion of preaustinoid A3 by ausJ lead to the formation of preaustinoid A4. The aldo-keto reductase ausK, with the help of ausH, is involved in the next step by transforming preaustinoid A4 into isoaustinone which is in turn hydroxylated by the P450 monooxygenase ausI to form austinolide. The cytochrome P450 monooxygenase ausG then modifies austinolide to austinol. Austinol is further acetylated to austin by the O-acetyltransferase ausP, which spontaneously changes to dehydroaustin. The cytochrome P450 monooxygenase then converts dehydroaustin is into 7-dehydrodehydroaustin. The hydroxylation catalyzed by ausR permits the second O-acetyltransferase ausQ to add an additional acetyl group to the molecule, leading to the formation of acetoxydehydroaustin. Due to genetic rearrangements of the clusters and the subsequent loss of some enzymes, the end product of the Penicillium brasilianum austinoid biosynthesis clusters is acetoxydehydroaustin. The polypeptide is O-acyltransferase ausP (Penicillium brasilianum).